A 169-amino-acid chain; its full sequence is Nucleoside diphosphate kinase 3 (169 aa).

6 residues coordinate ADP: Lys-29, Arg-105, Thr-111, Arg-122, Val-129, and Asn-132. The active-site Pros-phosphohistidine intermediate is the His-135.

This sequence belongs to the NDK family. As to quaternary structure, homohexamer. Mg(2+) serves as cofactor.

Its subcellular location is the mitochondrion outer membrane. The protein localises to the cytoplasm. It localises to the cytoskeleton. It is found in the cilium basal body. The catalysed reaction is a 2'-deoxyribonucleoside 5'-diphosphate + ATP = a 2'-deoxyribonucleoside 5'-triphosphate + ADP. It catalyses the reaction a ribonucleoside 5'-diphosphate + ATP = a ribonucleoside 5'-triphosphate + ADP. In terms of biological role, catalyzes the phosphorylation of ribonucleosides and deoxyribonucleoside diphosphates, other than ATP, into the corresponding triphosphates with ATP as the major phosphate donor. The ATP gamma phosphate is transferred to the nucleoside diphosphate beta phosphate via a ping-pong mechanism, using a phosphorylated active-site intermediate. Through the catalyzed exchange of gamma-phosphate between di- and triphosphonucleosides participates in regulation of intracellular nucleotide homeostasis. Required for ciliary function during renal development. Functionally, independently of its kinase activity, facilitates mitochondrial tethering prior to membrane fusion through its direct membrane-binding and hexamerization. Implicated in repair of both single- and double-stranded breaks in DNA, independently of its kinase activity. This Danio rerio (Zebrafish) protein is Nucleoside diphosphate kinase 3.